A 212-amino-acid chain; its full sequence is Hydroxyacylglutathione hydrolase GloC (212 aa).

Residues His-55, His-57, Asp-59, His-60, His-132, Asp-151, and His-192 each coordinate Zn(2+).

This sequence belongs to the metallo-beta-lactamase superfamily. Glyoxalase II family. Zn(2+) is required as a cofactor.

It catalyses the reaction an S-(2-hydroxyacyl)glutathione + H2O = a 2-hydroxy carboxylate + glutathione + H(+). The enzyme catalyses (R)-S-lactoylglutathione + H2O = (R)-lactate + glutathione + H(+). It functions in the pathway secondary metabolite metabolism; methylglyoxal degradation; (R)-lactate from methylglyoxal: step 2/2. In terms of biological role, type II glyoxalase, isozyme of GloB, that hydrolyzes (R)-S-lactoylglutathione to (R)-lactate and glutathione. Plays a role in methylglyoxal (MG) detoxification. The protein is Hydroxyacylglutathione hydrolase GloC of Haemophilus influenzae (strain ATCC 51907 / DSM 11121 / KW20 / Rd).